The sequence spans 915 residues: Probable serine/threonine-protein kinase dyrk2 (915 aa).

Low complexity-rich tracts occupy residues 51 to 79, 108 to 119, 170 to 185, and 196 to 218; these read TSNT…PTIS, SSSKSSSNSSSI, SSSS…STTS, and SSNS…SGSS. Disordered regions lie at residues 51 to 119, 132 to 334, and 349 to 533; these read TSNT…SSSI, FSSS…SKSS, and AIKS…PTKS. The span at 234 to 260 shows a compositional bias: polar residues; it reads PSHTISDSPRSSTMKSRSVSISNGSLF. 6 stretches are compositionally biased toward low complexity: residues 261-287, 300-333, 352-364, 379-391, 399-425, and 433-533; these read SPTN…SSIS, SSST…PSKS, SRSL…LARV, SSSS…SFSS, SSSK…ASKI, and SLSS…PTKS. Residues 605-902 form the Protein kinase domain; it reads FEIVSILGQG…AEQGLKHDWI (298 aa). Residues 611 to 619 and Lys-634 contribute to the ATP site; that span reads LGQGSFCQV. The active-site Proton acceptor is the Asp-731.

This sequence belongs to the protein kinase superfamily. CMGC Ser/Thr protein kinase family. MNB/DYRK subfamily.

It catalyses the reaction L-seryl-[protein] + ATP = O-phospho-L-seryl-[protein] + ADP + H(+). It carries out the reaction L-threonyl-[protein] + ATP = O-phospho-L-threonyl-[protein] + ADP + H(+). The catalysed reaction is L-tyrosyl-[protein] + ATP = O-phospho-L-tyrosyl-[protein] + ADP + H(+). This Dictyostelium discoideum (Social amoeba) protein is Probable serine/threonine-protein kinase dyrk2 (dyrk2).